A 105-amino-acid chain; its full sequence is ATP synthase subunit c (105 aa).

3 helical membrane passes run 3–23 (FLSL…GGMG), 32–52 (SILG…IGMG), and 78–98 (VAMA…IIAI).

This sequence belongs to the ATPase C chain family. As to quaternary structure, F-type ATPases have 2 components, F(1) - the catalytic core - and F(0) - the membrane proton channel. F(1) has five subunits: alpha(3), beta(3), gamma(1), delta(1), epsilon(1). F(0) has three main subunits: a(1), b(2) and c(10-14). The alpha and beta chains form an alternating ring which encloses part of the gamma chain. F(1) is attached to F(0) by a central stalk formed by the gamma and epsilon chains, while a peripheral stalk is formed by the delta and b chains.

It localises to the cell inner membrane. In terms of biological role, f(1)F(0) ATP synthase produces ATP from ADP in the presence of a proton or sodium gradient. F-type ATPases consist of two structural domains, F(1) containing the extramembraneous catalytic core and F(0) containing the membrane proton channel, linked together by a central stalk and a peripheral stalk. During catalysis, ATP synthesis in the catalytic domain of F(1) is coupled via a rotary mechanism of the central stalk subunits to proton translocation. Functionally, key component of the F(0) channel; it plays a direct role in translocation across the membrane. A homomeric c-ring of between 10-14 subunits forms the central stalk rotor element with the F(1) delta and epsilon subunits. The protein is ATP synthase subunit c of Helicobacter pylori (strain Shi470).